Consider the following 612-residue polypeptide: Peroxisomal carnitine O-octanoyltransferase (612 aa).

M1 carries the N-acetylmethionine modification. K40 and K57 each carry N6-succinyllysine. The Proton acceptor role is filled by H327. CoA is bound by residues K406 and 410–417 (KNKMLHPD). K406 is subject to N6-acetyllysine; alternate. K406 carries the post-translational modification N6-succinyllysine; alternate. (R)-carnitine is bound by residues Y439, T441, and T452. The Microbody targeting signal motif lies at 610 to 612 (THL).

Belongs to the carnitine/choline acetyltransferase family. In terms of assembly, monomer.

It localises to the peroxisome. It carries out the reaction octanoyl-CoA + (R)-carnitine = O-octanoyl-(R)-carnitine + CoA. The catalysed reaction is 4,8-dimethylnonanoyl-CoA + (R)-carnitine = O-4,8-dimethylnonanoyl-(R)-carnitine + CoA. Its pathway is lipid metabolism; fatty acid beta-oxidation. Beta-oxidation of fatty acids. The highest activity concerns the C6 to C10 chain length substrate. Converts the end product of pristanic acid beta oxidation, 4,8-dimethylnonanoyl-CoA, to its corresponding carnitine ester. In Homo sapiens (Human), this protein is Peroxisomal carnitine O-octanoyltransferase (CROT).